The primary structure comprises 66 residues: Phylloseptin-S3 (66 aa).

An N-terminal signal peptide occupies residues 1–22 (MAFLKKSLFLVLFLGLVSLSIC). Residues 23 to 46 (EEEKRETEEEEHDQEEDDKSEEKR) constitute a propeptide that is removed on maturation. The disordered stretch occupies residues 25-44 (EKRETEEEEHDQEEDDKSEE). Positions 30–41 (EEEEHDQEEDDK) are enriched in acidic residues. A Phenylalanine amide modification is found at Phe-65.

This sequence belongs to the frog skin active peptide (FSAP) family. Phylloseptin subfamily. As to expression, expressed by the skin glands.

Its subcellular location is the secreted. The protein resides in the target cell membrane. Functionally, antimicrobial peptide with activity against the Gram-positive S.pyogenes (MIC=12.5 uM), but not against all other bacteria tested (both Gram-positive and Gram-negative). Does not show activity against fungi, and against Leishmania species. The sequence is that of Phylloseptin-S3 from Phyllomedusa sauvagei (Sauvage's leaf frog).